The primary structure comprises 376 residues: Flagellar P-ring protein (376 aa).

Positions 1–29 (MTQRPFSLLSHLGRICLAAAMLAALPAQA) are cleaved as a signal peptide.

The protein belongs to the FlgI family. The basal body constitutes a major portion of the flagellar organelle and consists of four rings (L,P,S, and M) mounted on a central rod.

The protein resides in the periplasm. It is found in the bacterial flagellum basal body. Its function is as follows. Assembles around the rod to form the L-ring and probably protects the motor/basal body from shearing forces during rotation. This is Flagellar P-ring protein from Bordetella avium (strain 197N).